The sequence spans 466 residues: MSTEKDYVVADIGLADFGRKEITIAETEMPGLMSCRAEFGDAKPLKGARITGSLHMTIQTAVLIETLVALGAEVRWASCNIFSTQDHAAAAIAAAGVPVFAIKGESLEDYWVYTDKIFQWADGGLSNMILDDGGDATMYILLGARAEAGEDVLSHPHSEEEEILFAQIKKRLAASPGWFTKQRDAIKGVTEETTTGVNRLYQLSQKGLLPFPAINVNDSVTKSKFDNKYGCKESLVDGIRRGTDVMMAGKVAVVCGYGDVGKGSAASLSGAGARVKVTEADPICALQAAMDGYEVVLLEDVVSSADIFITTTGNKDVIRIDHMREMKDMAIVGNIGHFDNEIEVAALRNLKWTNVKPQVDLIEFPKGNRIILLSEGRLLNLGNATGHPSFVMSASFTNQTLAQIELFTKPGQYENKVYILPKHLDEKVARLHLDKLGVKLTQLSEEQAAYIGVSPKGPFKSDHYRY.

Positions 57, 132, and 192 each coordinate substrate. 193–195 (TTT) contacts NAD(+). Residues K222 and D226 each contribute to the substrate site. Residues N227, 256–261 (GYGDVG), E279, N314, 335–337 (IGH), and N380 contribute to the NAD(+) site.

Belongs to the adenosylhomocysteinase family. The cofactor is NAD(+).

The protein resides in the cytoplasm. It carries out the reaction S-adenosyl-L-homocysteine + H2O = L-homocysteine + adenosine. It functions in the pathway amino-acid biosynthesis; L-homocysteine biosynthesis; L-homocysteine from S-adenosyl-L-homocysteine: step 1/1. Its function is as follows. May play a key role in the regulation of the intracellular concentration of adenosylhomocysteine. This Rhizobium etli (strain CIAT 652) protein is Adenosylhomocysteinase.